We begin with the raw amino-acid sequence, 677 residues long: WD and tetratricopeptide repeats protein 1 (677 aa).

WD repeat units follow at residues 45-84 (GHSG…KLLS), 88-129 (GHTA…TIHM), 132-172 (DHTN…KHSE), 182-222 (GQLV…NHRK), and 265-305 (RLRV…RPYT). Phosphoserine is present on serine 353. 2 TPR repeats span residues 362–395 (LERV…APHN) and 397–432 (MLYG…NPCH). Positions 487-509 (NDGEEKKGPGGGAPVRLRSTSRK) are disordered. Serine 511 bears the Phosphoserine mark. WD repeat units follow at residues 535 to 575 (NTTT…LVRV) and 578 to 617 (GDES…EDLT). The segment at 655-677 (SSGGAGASDDEDSSEGQVQCRPS) is disordered.

It functions in the pathway protein modification; protein ubiquitination. May function as a substrate receptor for CUL4-DDB1 E3 ubiquitin-protein ligase complex. This chain is WD and tetratricopeptide repeats protein 1 (WDTC1), found in Homo sapiens (Human).